The sequence spans 1447 residues: MENSLGCVWVPKLAFVLFGASLLSAHLQVTGFQIKPFTSLHFVSEPSDAVTMRGGNVLLNCSAESDRGVPVIKWKKDGLILALGMDDRKQQLPNGSLLIQNILHSRHHKPDEGLYQCEASLADSGSIISRTAKVTVAGPLRFLSQTESITAFMGDTVLLKCEVIGEPMPTIHWQKNQQDLNPLPGDSRVVVLPSGALQISRLQPGDSGVYRCSARNPASIRTGNEAEVRILSDPGLHRQLYFLQRPSNVIAIEGKDAVLECCVSGYPPPSFTWLRGEEVIQLRSKKYSLLGGSNLLISNVTDDDSGTYTCVVTYKNENISASAELTVLVPPWFLNHPSNLYAYESMDIEFECAVSGKPVPTVNWMKNGDVVIPSDYFQIVGGSNLRILGVVKSDEGFYQCVAENEAGNAQSSAQLIVPKPAIPSSSILPSAPRDVLPVLVSSRFVRLSWRPPAEAKGNIQTFTVFFSREGDNRERALNTTQPGSLQLTVGNLKPEAMYTFRVVAYNEWGPGESSQPIKVATQPELQVPGPVENLHAVSTSPTSILITWEPPAYANGPVQGYRLFCTEVSTGKEQNIEVDGLSYKLEGLKKFTEYTLRFLAYNRYGPGVSTDDITVVTLSDVPSAPPQNISLEVVNSRSIKVSWLPPPSGTQNGFITGYKIRHRKTTRRGEMETLEPNNLWYLFTGLEKGSQYSFQVSAMTVNGTGPPSNWYTAETPENDLDESQVPDQPSSLHVRPQTNCIIMSWTPPLNPNIVVRGYIIGYGVGSPYAETVRVDSKQRYYSIERLESSSHYVISLKAFNNAGEGVPLYESATTRSITDPTDPVDYYPLLDDFPTSGPDVSTPMLPPVGVQAVALTHEAVRVSWADNSVPKNQKTSDVRLYTVRWRTSFSASAKYKSEDTTSLSYTATGLKPNTMYEFSVMVTKNRRSSTWSMTAHATTYEAAPTSAPKDLTVITREGKPRAVIVSWQPPLEANGKITAYILFYTLDKNIPIDDWIMETISGDRLTHQIMDLSLDTMYYFRIQARNVKGVGPLSDPILFRTLKVEHPDKMANDQGRHGDGGYWPVDTNLIDRSTLNEPPIGQMHPPHGSVTPQKNSNLLVITVVTVGVLTVLVVVIVAVICTRRSSAQQRKKRATHSVSKRKGSQKDLRPPDLWIHHEEMEMKNIEKPTGTDPAGRDSPIQSCQDLTPVSHSQSETQMGSKSASHSGQDTEDAGSSMSTLERSLAARRATRAKLMIPMEAQSSNPAVVSAIPVPTLESAQYPGILPSPTCGYPHPQFTLRPVPFPTLSVDRGFGAGRTQSVSEGPTTQQQPMLPPAQPEHPSSEEAPSRTIPTACVRPTHPLRSFANPLLPPPMSAIEPKVPYTPLLSQPGPTLPKTHVKTASLGLAGKARSPLLPVSVPTAPEVSEESHKPTEDPASVYEQDDLSEQMASLEGLMKQLNAITGSAF.

The signal sequence occupies residues 1–25 (MENSLGCVWVPKLAFVLFGASLLSA). Topologically, residues 26–1097 (HLQVTGFQIK…GSVTPQKNSN (1072 aa)) are extracellular. 4 Ig-like C2-type domains span residues 36-135 (PFTS…AKVT), 139-229 (PLRF…AEVR), 234-326 (PGLH…AELT), and 331-416 (PWFL…AQLI). Asn60 and Asn94 each carry an N-linked (GlcNAc...) asparagine glycan. 3 cysteine pairs are disulfide-bonded: Cys61/Cys117, Cys161/Cys212, and Cys261/Cys310. N-linked (GlcNAc...) asparagine glycans are attached at residues Asn299 and Asn318. A disulfide bond links Cys352 and Cys400. Fibronectin type-III domains are found at residues 431 to 524 (APRD…TQPE), 530 to 620 (PVEN…TLSD), 625 to 718 (PPQN…TPEN), 728 to 821 (QPSS…TDPT), 846 to 942 (PPVG…TYEA), and 947 to 1044 (APKD…TLKV). The N-linked (GlcNAc...) asparagine glycan is linked to Asn478. 2 N-linked (GlcNAc...) asparagine glycosylation sites follow: Asn628 and Asn702. Residues 1098–1122 (LLVITVVTVGVLTVLVVVIVAVICT) traverse the membrane as a helical segment. The Cytoplasmic segment spans residues 1123–1447 (RRSSAQQRKK…QLNAITGSAF (325 aa)). Disordered regions lie at residues 1126 to 1153 (SAQQRKKRATHSVSKRKGSQKDLRPPDL) and 1166 to 1220 (EKPT…MSTL). Basic residues predominate over residues 1129 to 1143 (QRKKRATHSVSKRKG). Residues 1144-1153 (SQKDLRPPDL) are compositionally biased toward basic and acidic residues. Phosphoserine; by MAPK1 is present on Ser1178. Positions 1179–1220 (PIQSCQDLTPVSHSQSETQMGSKSASHSGQDTEDAGSSMSTL) are enriched in polar residues. Phosphothreonine; by MAPK1 is present on Thr1187. A Phosphoserine; by MAPK1 modification is found at Ser1267. Disordered stretches follow at residues 1291–1329 (RGFGAGRTQSVSEGPTTQQQPMLPPAQPEHPSSEEAPSR) and 1394–1419 (LLPVSVPTAPEVSEESHKPTEDPASV). Positions 1297 to 1311 (RTQSVSEGPTTQQQP) are enriched in polar residues.

Belongs to the immunoglobulin superfamily. DCC family. Interacts with the cytoplasmic part of UNC5A, UNC5B, UNC5C and probably UNC5D. Interacts with MAPK1. Interacts with NTN1. Interacts with DSCAM. Interacts with PTK2/FAK1. Interacts with MYO10. Interacts with CBLN4; this interaction can be competed by NTN1. Interacts with SIAH1 and SIAH2. Post-translationally, ubiquitinated; mediated by SIAH1 or SIAH2 and leading to its subsequent proteasomal degradation. As to expression, in the embryo, expressed at high levels in the developing brain and neural tube. In the embryo, expressed in developing neurons of the telencephalic cortical plate and in developing brainstem nuclei. In adult, highly expressed in brain with very low levels found in testis, heart and thymus. Isoform C is expressed only in the embryo.

Its subcellular location is the membrane. Receptor for netrin required for axon guidance. Mediates axon attraction of neuronal growth cones in the developing nervous system upon ligand binding. Its association with UNC5 proteins may trigger signaling for axon repulsion. It also acts as a dependence receptor required for apoptosis induction when not associated with netrin ligand. Implicated as a tumor suppressor gene. This is Netrin receptor DCC (Dcc) from Mus musculus (Mouse).